The sequence spans 252 residues: MITKRIIPCLDVRKGRVVKGVNFVDIKDAGDPVALARAYNDQGADEIVFLDITASHEERYILLDVVKKTSEEIFIPLTVGGGIRTVEDMRQIIKSGADKVSINSSAVKNPSMITDCARQFGSQAVVIAMDVKRGADGRYEVYVRGGREKTGLEAVDWARRVAQLGAGEILLTSMDRDGTKSGYDLEITKRISQAVNIPVIASGGAGSVQDFADAFIEGQADAALAASLFHYNEVSIPRLKQSLHEMDISMRR.

Active-site residues include aspartate 11 and aspartate 130.

It belongs to the HisA/HisF family. In terms of assembly, heterodimer of HisH and HisF.

The protein resides in the cytoplasm. The enzyme catalyses 5-[(5-phospho-1-deoxy-D-ribulos-1-ylimino)methylamino]-1-(5-phospho-beta-D-ribosyl)imidazole-4-carboxamide + L-glutamine = D-erythro-1-(imidazol-4-yl)glycerol 3-phosphate + 5-amino-1-(5-phospho-beta-D-ribosyl)imidazole-4-carboxamide + L-glutamate + H(+). Its pathway is amino-acid biosynthesis; L-histidine biosynthesis; L-histidine from 5-phospho-alpha-D-ribose 1-diphosphate: step 5/9. In terms of biological role, IGPS catalyzes the conversion of PRFAR and glutamine to IGP, AICAR and glutamate. The HisF subunit catalyzes the cyclization activity that produces IGP and AICAR from PRFAR using the ammonia provided by the HisH subunit. This chain is Imidazole glycerol phosphate synthase subunit HisF, found in Alkaliphilus metalliredigens (strain QYMF).